The chain runs to 638 residues: Lactose permease (638 aa).

Positions 1-470 (MHNHKVSGKQ…AQVIEELKSK (470 aa)) are permease. A run of 12 helical transmembrane segments spans residues 27-47 (FYGVMSTYFIIFITSGMFSGL), 56-76 (IGLITGLMVLVRIIELVIDPI), 94-114 (WILIGTVVSAALLLILFTGIF), 121-141 (WILFAILFVLIYIAFDVFYSL), 166-186 (LGAFSGIIGWNSLPIIVVPLV), 204-224 (WFAFAAVISALAIICALIVCF), 261-281 (LAYLLYSLAAVITNGVLFYMY), 291-311 (FWVVGIIATIIGCCINPSFPV), 320-340 (WLFIAGQTCMVLAYVLFIFGH), 343-363 (VFLMDLGLVLFNINFALLVTV), 395-415 (FAGAVSNALVGYVAIAAGMTG), and 429-449 (TFNMMALYIPLALAVLSIVVF). The PTS EIIA type-1 domain maps to 503-610 (SSVVDEDGKP…KDTIVIFYTQ (108 aa)). The residue at position 558 (H558) is a Phosphohistidine; by HPr.

This sequence in the N-terminal section; belongs to the sodium:galactoside symporter (TC 2.A.2) family.

It localises to the cell membrane. Functionally, responsible for transport of beta-galactosides into the cell, with the concomitant uptake of protons (symport system), and also for transport of homologous and heterologous exchange of beta-galactosides. The polypeptide is Lactose permease (lacS) (Lactobacillus helveticus (Lactobacillus suntoryeus)).